The following is a 606-amino-acid chain: (R)-limonene synthase 1, chloroplastic (606 aa).

Residues 1–32 (MSSCINPSTLVTSVNAFKCLPLATNKAAIRIM) constitute a chloroplast transit peptide. 2 residues coordinate Mn(2+): aspartate 342 and aspartate 346. The substrate site is built by aspartate 342, aspartate 346, arginine 484, aspartate 487, and lysine 503. Residues 342-346 (DDIYD) carry the DDXXD motif motif. Aspartate 487 contributes to the Mn(2+) binding site.

Belongs to the terpene synthase family. Requires Mg(2+) as cofactor. Mn(2+) serves as cofactor.

Its subcellular location is the plastid. The protein localises to the chloroplast. The catalysed reaction is (2E)-geranyl diphosphate = (4R)-limonene + diphosphate. The sequence is that of (R)-limonene synthase 1, chloroplastic from Citrus limon (Lemon).